Reading from the N-terminus, the 146-residue chain is MKFSLLSAIAAAVFVPFTSATPLASTTDLSYDTHYDDPSLALSGVTCSDGDNGMITKGYNTAGEIPNYPHVGGAFTVETWNSPNCGKCYKVTYNAKTIFLTAIDHSNSGFNIAKKSMDVLTNGRAEELGRIKVTYEEVASSLCGLK.

An N-terminal signal peptide occupies residues 1-20 (MKFSLLSAIAAAVFVPFTSA).

Belongs to the cerato-platanin family. Glycosylated.

It is found in the secreted. This chain is Heat-stable 19 kDa antigen (CSA), found in Coccidioides immitis (strain RS) (Valley fever fungus).